We begin with the raw amino-acid sequence, 308 residues long: SAP30-binding protein (308 aa).

Residues 15-101 (AEYSDPESDG…EAEKRDPQEL (87 aa)) are disordered. Phosphoserine is present on residues Ser-18, Ser-22, Ser-43, and Ser-52. The span at 57 to 78 (DEDGYEEEEDENSKQSEDDDSE) shows a compositional bias: acidic residues. Residues 79 to 99 (TEKPEADDPKDNTEAEKRDPQ) are compositionally biased toward basic and acidic residues. A Glycyl lysine isopeptide (Lys-Gly) (interchain with G-Cter in SUMO2) cross-link involves residue Lys-95. Ser-113 is subject to Phosphoserine. Residues Lys-220, Lys-304, and Lys-305 each participate in a glycyl lysine isopeptide (Lys-Gly) (interchain with G-Cter in SUMO2) cross-link.

It belongs to the HCNGP family. In terms of assembly, interacts with histone deacetylase complex subunit SAP30.

The protein localises to the nucleus. In terms of biological role, plays a role in transcriptional repression by promoting histone deacetylase activity, leading to deacetylation of histone H3. May be involved in the regulation of beta-2-microglobulin genes. This Mus musculus (Mouse) protein is SAP30-binding protein (Sap30bp).